The sequence spans 146 residues: Hemoglobin subunit beta (146 aa).

Positions 2–146 constitute a Globin domain; that stretch reads QWAAEEKQLI…VAHALARKYH (145 aa). Residues histidine 63 and histidine 92 each contribute to the heme b site.

It belongs to the globin family. As to quaternary structure, heterotetramer of two alpha chains and two beta chains. As to expression, red blood cells.

In terms of biological role, involved in oxygen transport from the lung to the various peripheral tissues. The polypeptide is Hemoglobin subunit beta (HBB) (Accipiter gentilis (Northern goshawk)).